The primary structure comprises 200 residues: Cytochrome c biogenesis ATP-binding export protein CcmA (200 aa).

The 199-residue stretch at Leu2–Leu200 folds into the ABC transporter domain. Gly34 to Thr41 contributes to the ATP binding site.

It belongs to the ABC transporter superfamily. CcmA exporter (TC 3.A.1.107) family. In terms of assembly, the complex is composed of two ATP-binding proteins (CcmA) and two transmembrane proteins (CcmB).

The protein resides in the cell inner membrane. It catalyses the reaction heme b(in) + ATP + H2O = heme b(out) + ADP + phosphate + H(+). Its function is as follows. Part of the ABC transporter complex CcmAB involved in the biogenesis of c-type cytochromes; once thought to export heme, this seems not to be the case, but its exact role is uncertain. Responsible for energy coupling to the transport system. The sequence is that of Cytochrome c biogenesis ATP-binding export protein CcmA from Legionella pneumophila (strain Lens).